Here is a 359-residue protein sequence, read N- to C-terminus: NF-kappa-B inhibitor beta (359 aa).

Residues serine 19 and serine 23 each carry the phosphoserine; by RPS6KA1 modification. ANK repeat units lie at residues 57 to 86 (DGDT…GTEY), 93 to 122 (LGQT…GVLV), 126 to 155 (GGHT…SHPR), 206 to 235 (DGHT…DLNK), 240 to 269 (CGRT…DPTA), and 273 to 302 (GGRT…PEPE). Positions 153–192 (HPRDASDTYLTQSQDHTPDTSHAPVATDPQPNPGNEEELR) are disordered. The segment covering 298–308 (APEPEDKDDKL) has biased composition (basic and acidic residues). A disordered region spans residues 298-359 (APEPEDKDDK…KPLPDDPNPA (62 aa)). Residue serine 318 is modified to Phosphoserine. Residues 318–331 (SDSDNRDEGDEYDD) are compositionally biased toward acidic residues. Residues 342–359 (QPPPSPAAKPLPDDPNPA) show a composition bias toward pro residues.

Belongs to the NF-kappa-B inhibitor family. Interacts with THRB (via ligand-binding domain). Interacts with RELA and REL. Interacts with COMMD1. Interacts with inhibitor kappa B-interacting Ras-like NKIRAS1 and NKIRAS2. Post-translationally, phosphorylated by RPS6KA1; followed by degradation. Interaction with NKIRAS1 and NKIRAS2 probably prevents phosphorylation.

Its subcellular location is the cytoplasm. The protein localises to the nucleus. Inhibits NF-kappa-B by complexing with and trapping it in the cytoplasm. However, the unphosphorylated form resynthesized after cell stimulation is able to bind NF-kappa-B allowing its transport to the nucleus and protecting it to further NFKBIA-dependent inactivation. Association with inhibitor kappa B-interacting NKIRAS1 and NKIRAS2 prevent its phosphorylation rendering it more resistant to degradation, explaining its slower degradation. This Rattus norvegicus (Rat) protein is NF-kappa-B inhibitor beta (Nfkbib).